The sequence spans 295 residues: Elongation factor Ts (295 aa).

Positions 79–82 (TDFV) are involved in Mg(2+) ion dislocation from EF-Tu.

It belongs to the EF-Ts family.

The protein localises to the cytoplasm. Its function is as follows. Associates with the EF-Tu.GDP complex and induces the exchange of GDP to GTP. It remains bound to the aminoacyl-tRNA.EF-Tu.GTP complex up to the GTP hydrolysis stage on the ribosome. This Bacillus mycoides (strain KBAB4) (Bacillus weihenstephanensis) protein is Elongation factor Ts.